The sequence spans 623 residues: tRNA uridine 5-carboxymethylaminomethyl modification enzyme MnmG (623 aa).

Residue 10-15 (GGGHAG) coordinates FAD. An NAD(+)-binding site is contributed by 269 to 283 (GPRYCPSIEDKIVRF).

The protein belongs to the MnmG family. As to quaternary structure, homodimer. Heterotetramer of two MnmE and two MnmG subunits. The cofactor is FAD.

The protein localises to the cytoplasm. Its function is as follows. NAD-binding protein involved in the addition of a carboxymethylaminomethyl (cmnm) group at the wobble position (U34) of certain tRNAs, forming tRNA-cmnm(5)s(2)U34. The sequence is that of tRNA uridine 5-carboxymethylaminomethyl modification enzyme MnmG from Rhizobium meliloti (strain 1021) (Ensifer meliloti).